The chain runs to 55 residues: ATP synthase F(0) complex subunit 8 (55 aa).

A helical membrane pass occupies residues 4–24 (LNPAPWFAILVFSWLVFLTVI). The interval 34-55 (TNEPTSQSTEKAKPEPWNWPWH) is disordered.

This sequence belongs to the ATPase protein 8 family. In terms of assembly, component of the ATP synthase complex composed at least of ATP5F1A/subunit alpha, ATP5F1B/subunit beta, ATP5MC1/subunit c (homooctomer), MT-ATP6/subunit a, MT-ATP8/subunit 8, ATP5ME/subunit e, ATP5MF/subunit f, ATP5MG/subunit g, ATP5MK/subunit k, ATP5MJ/subunit j, ATP5F1C/subunit gamma, ATP5F1D/subunit delta, ATP5F1E/subunit epsilon, ATP5PF/subunit F6, ATP5PB/subunit b, ATP5PD/subunit d, ATP5PO/subunit OSCP. ATP synthase complex consists of a soluble F(1) head domain (subunits alpha(3) and beta(3)) - the catalytic core - and a membrane F(0) domain - the membrane proton channel (subunits c, a, 8, e, f, g, k and j). These two domains are linked by a central stalk (subunits gamma, delta, and epsilon) rotating inside the F1 region and a stationary peripheral stalk (subunits F6, b, d, and OSCP).

Its subcellular location is the mitochondrion membrane. Functionally, subunit 8, of the mitochondrial membrane ATP synthase complex (F(1)F(0) ATP synthase or Complex V) that produces ATP from ADP in the presence of a proton gradient across the membrane which is generated by electron transport complexes of the respiratory chain. ATP synthase complex consist of a soluble F(1) head domain - the catalytic core - and a membrane F(1) domain - the membrane proton channel. These two domains are linked by a central stalk rotating inside the F(1) region and a stationary peripheral stalk. During catalysis, ATP synthesis in the catalytic domain of F(1) is coupled via a rotary mechanism of the central stalk subunits to proton translocation. In vivo, can only synthesize ATP although its ATP hydrolase activity can be activated artificially in vitro. Part of the complex F(0) domain. The chain is ATP synthase F(0) complex subunit 8 from Oncorhynchus mykiss (Rainbow trout).